Consider the following 288-residue polypeptide: Transmembrane and coiled-coil domain-containing protein 5A (288 aa).

Positions 10–192 form a coiled coil; it reads KRNIISLNMD…ALFLEREVSK (183 aa). The helical transmembrane segment at 224–244 threads the bilayer; sequence IFCCLFFITLFFIRLLSYMFF.

This sequence belongs to the TMCO5 family.

It is found in the endoplasmic reticulum membrane. Its subcellular location is the nucleus membrane. The protein is Transmembrane and coiled-coil domain-containing protein 5A (TMCO5A) of Homo sapiens (Human).